Consider the following 339-residue polypeptide: Phosphate acyltransferase (339 aa).

Belongs to the PlsX family. As to quaternary structure, homodimer. Probably interacts with PlsY.

The protein resides in the cytoplasm. The enzyme catalyses a fatty acyl-[ACP] + phosphate = an acyl phosphate + holo-[ACP]. The protein operates within lipid metabolism; phospholipid metabolism. In terms of biological role, catalyzes the reversible formation of acyl-phosphate (acyl-PO(4)) from acyl-[acyl-carrier-protein] (acyl-ACP). This enzyme utilizes acyl-ACP as fatty acyl donor, but not acyl-CoA. The sequence is that of Phosphate acyltransferase from Acetivibrio thermocellus (strain ATCC 27405 / DSM 1237 / JCM 9322 / NBRC 103400 / NCIMB 10682 / NRRL B-4536 / VPI 7372) (Clostridium thermocellum).